The primary structure comprises 20 residues: Agglutinin beta-1 chain (20 aa).

A compositionally biased stretch (polar residues) spans 1–11 (KQRSGESQNII). Residues 1 to 20 (KQRSGESQNIIVGSWGAKVS) are disordered.

The protein belongs to the jacalin lectin family. In terms of assembly, tetramer of four alpha chains associated with two or four beta chains.

In terms of biological role, D-galactose-specific lectin, binds the T-antigen structure Gal-beta1,3-GalNAc (Thomsen-Friedenreich-antigen-specific lectin). Potent and selective stimulant of distinct T- and B-cell functions. Shows a unique ability to specifically recognize IgA-1 from human serum. This is Agglutinin beta-1 chain from Artocarpus tonkinensis.